The chain runs to 988 residues: DNA-binding protein SMUBP-2 (988 aa).

An N-acetylalanine modification is found at Ala2. Residues 213-220 (GPPGTGKT), Gln402, Tyr441, and Glu570 contribute to the ATP site. An SS DNA-binding region spans residues 637-783 (TAFEYLDDIV…KARHITVSRR (147 aa)). Disordered stretches follow at residues 651 to 722 (THEG…GGTD), 765 to 820 (LKHD…PHGS), and 835 to 872 (RQQG…ALPS). Over residues 702 to 718 (SQVQPQHSSKANGSDRT) the composition is skewed to polar residues. Residues 721–784 (TDRTEHFRAM…ARHITVSRRS (64 aa)) enclose the R3H domain. A compositionally biased stretch (basic and acidic residues) spans 765-775 (LKHDSTGEGKA). 2 positions are modified to phosphoserine: Ser797 and Ser800. The segment covering 802 to 817 (AQAEPEPQVEQPVGQP) has biased composition (low complexity). Polar residues predominate over residues 835 to 844 (RQQGCQAQSQ). The short motif at 857–861 (KKKKK) is the Nuclear localization signal element. Residues 884-933 (VKADNTCSFTKCSASTTTLGQFCMHCSRRYCLSHHLPEIHGCGEKARAHA) form an AN1-type zinc finger. Residues Cys890, Cys895, Cys906, Cys909, Cys914, His917, His923, and Cys925 each coordinate Zn(2+). Residues 943–988 (LYAGSGTKDRALDPAKRAQLQRKLDKKLGELSSQRTSKKKEKERGT) are disordered. Basic and acidic residues predominate over residues 949–971 (TKDRALDPAKRAQLQRKLDKKLG). Positions 957 to 986 (AKRAQLQRKLDKKLGELSSQRTSKKKEKER) form a coiled coil.

It belongs to the DNA2/NAM7 helicase family. Homooligomer. Interacts with RUVBL1. Interacts with RUVBL2. Interacts with GTF3C1. Interacts with ABT1. Interacts with ribosomes. Expressed in liver, skin, muscle, heart, brain, spleen and kidney.

The protein resides in the nucleus. It is found in the cytoplasm. It localises to the cell projection. The protein localises to the axon. The catalysed reaction is ATP + H2O = ADP + phosphate + H(+). Functionally, 5' to 3' helicase that unwinds RNA and DNA duplexes in an ATP-dependent reaction. Specific to 5'-phosphorylated single-stranded guanine-rich sequences. May play a role in RNA metabolism, ribosome biogenesis or initiation of translation. May play a role in regulation of transcription. Interacts with tRNA-Tyr. This Rattus norvegicus (Rat) protein is DNA-binding protein SMUBP-2 (Ighmbp2).